The sequence spans 699 residues: Elongation factor G (699 aa).

The 276-residue stretch at 8–283 (EHIRNIGICA…AVVDFLPSPI (276 aa)) folds into the tr-type G domain. Residues 17 to 24 (AHIDAGKT), 81 to 85 (DTPGH), and 135 to 138 (NKMD) each bind GTP.

Belongs to the TRAFAC class translation factor GTPase superfamily. Classic translation factor GTPase family. EF-G/EF-2 subfamily.

It localises to the cytoplasm. Its function is as follows. Catalyzes the GTP-dependent ribosomal translocation step during translation elongation. During this step, the ribosome changes from the pre-translocational (PRE) to the post-translocational (POST) state as the newly formed A-site-bound peptidyl-tRNA and P-site-bound deacylated tRNA move to the P and E sites, respectively. Catalyzes the coordinated movement of the two tRNA molecules, the mRNA and conformational changes in the ribosome. The chain is Elongation factor G from Rickettsia helvetica.